We begin with the raw amino-acid sequence, 230 residues long: Cytidylate kinase (230 aa).

12-20 is a binding site for ATP; that stretch reads GPSGAGKGT.

This sequence belongs to the cytidylate kinase family. Type 1 subfamily.

It localises to the cytoplasm. It carries out the reaction CMP + ATP = CDP + ADP. The catalysed reaction is dCMP + ATP = dCDP + ADP. The polypeptide is Cytidylate kinase (Aeromonas salmonicida (strain A449)).